The primary structure comprises 494 residues: MARSCVTDPRWRELVALYRYDWIAAADVLFGKTPTWQQDEIIESTQQDGSWTSVTSGHGTGKSDMTSIIAILFIMFFPGARVILVANKRQQVLDGIFKYIKSNWATAVSRFPWLSKYFILTETSFFEVTGKGVWTILIKSCRPGNEEALAGEHADHLLYIIDEASGVSDKAFSVITGALTGKDNRILLLSQPTRPSGYFYDSHHRLAIRPGNPDGLFTAIILNSEESPLVDAKFIRAKLAEYGGRDNPMYMIKVRGEFPKSQDGFLLGRDEVERATRRKVKIAKGWGWVACVDVAGGTGRDKSVINIMMVSGQRNKRRVINYRMLEYTDVTETQLAAKIFAECNPERFPNITIAIDGDGLGKSTADLMYERYGITVQRIRWGKKMHSREDKSLYFDMRAFANIQAAEAVKSGRMRLDKGAATIEEASKIPVGINSAGQWKVMSKEDMKKKLNLHSPDHWDTYCFAMLANYVPQDEVLSVEDEAQVDEALAWLNE.

26-33 (ADVLFGKT) is an ATP binding site. The Walker A motif signature appears at 56-63 (SGHGTGKS). Positions 158–163 (LYIIDE) match the Walker B motif motif. Glutamate 163 acts as the For ATPase activity in catalysis. Positions 293, 356, and 446 each coordinate Mg(2+).

This sequence belongs to the punalikevirus large terminase family. In terms of assembly, interacts with pacA protein. Mg(2+) is required as a cofactor.

In terms of biological role, component of the molecular motor that translocates genomic DNA in empty capsid during DNA packaging. Heterooligomerize with small terminase protein to be docked on capsid portal protein. Forms a ring-like structure through which genomic DNA is translocated into the capsid. May have or induce an endonuclease activity to cleave the genome concatemer after encapsidation. The polypeptide is Probable terminase, large subunit (pacB) (Escherichia coli (Bacteriophage P7)).